An 80-amino-acid polypeptide reads, in one-letter code: Conotoxin Bt6.5 (80 aa).

The first 22 residues, methionine 1–alanine 22, serve as a signal peptide directing secretion. The propeptide occupies lysine 23–serine 45. Cystine bridges form between cysteine 48/cysteine 62, cysteine 55/cysteine 66, and cysteine 61/cysteine 73.

The protein belongs to the conotoxin O1 superfamily. In terms of tissue distribution, expressed by the venom duct.

Its subcellular location is the secreted. Its function is as follows. When injected intracranially in mice, induces a series of symptoms such as quivering, climbing, scratching, barrel rolling and paralysis of limbs. Unexpectedly, no effect is observed on ionic currents when tested on locust DUM neuron. The chain is Conotoxin Bt6.5 from Conus betulinus (Beech cone).